The sequence spans 339 residues: Uroporphyrinogen decarboxylase (339 aa).

Substrate contacts are provided by residues 21 to 25 (RQAGR), aspartate 71, tyrosine 147, serine 202, and histidine 315.

This sequence belongs to the uroporphyrinogen decarboxylase family. As to quaternary structure, homodimer.

The protein localises to the cytoplasm. The enzyme catalyses uroporphyrinogen III + 4 H(+) = coproporphyrinogen III + 4 CO2. It functions in the pathway porphyrin-containing compound metabolism; protoporphyrin-IX biosynthesis; coproporphyrinogen-III from 5-aminolevulinate: step 4/4. Its function is as follows. Catalyzes the decarboxylation of four acetate groups of uroporphyrinogen-III to yield coproporphyrinogen-III. In Helicobacter pylori (strain Shi470), this protein is Uroporphyrinogen decarboxylase.